Consider the following 133-residue polypeptide: MANHDPISDMLTRIRNASEKRHQTTRVPASRMSRSIAKVLQQEGFISEISEEGEGVLTHLVLELKYSGKHRHPTIRSMQRVSKPGLRIYKNTRALPKVLGGLGMAIISTSKGVMSDRDARKQGVGGEVLCYVY.

The protein belongs to the universal ribosomal protein uS8 family. As to quaternary structure, part of the 30S ribosomal subunit. Contacts proteins S5 and S12.

Functionally, one of the primary rRNA binding proteins, it binds directly to 16S rRNA central domain where it helps coordinate assembly of the platform of the 30S subunit. The chain is Small ribosomal subunit protein uS8 from Prochlorococcus marinus (strain MIT 9303).